Consider the following 202-residue polypeptide: MRPLMAGKRRKDILPLEEALRAQSAFARTLRTWEGARRAAVRSATVRARRRGALPSSQAAAAPRVSLMEVALARYGLFDKDAAGACAEYARQRRTFSIHSRRGRRKLRTAVPEARLDLHGMTCSEARSALDSFFAQARERLLQKVEIVHGKGHHSKGGSVLAPSVKRYVQAHPHAGELFHPAERRGGKGTTWVLLKRSVPLH.

Residues 116–196 (LDLHGMTCSE…GKGTTWVLLK (81 aa)) enclose the Smr domain.

This is an uncharacterized protein from Treponema pallidum (strain Nichols).